The sequence spans 1512 residues: Bifunctional glutamate/proline--tRNA ligase (1512 aa).

Residues 164–759 (GTKWDVSGNR…SSVLYSRVAV (596 aa)) are glutamate--tRNA ligase. The short motif at 204–214 (PEASGYLHIGH) is the 'HIGH' region element. The interval 294–315 (TPAEQMKAEREQRTESKHRKNS) is disordered. The span at 299–308 (MKAEREQRTE) shows a compositional bias: basic and acidic residues. K300 carries the post-translational modification N6-acetyllysine; alternate. K300 is subject to N6-malonyllysine; alternate. T355 is subject to Phosphothreonine. At K417 the chain carries N6-acetyllysine. The short motif at 432 to 436 (VLSKR) is the 'KMSKS' region element. A Phosphoserine modification is found at S434. An N6-acetyllysine mark is found at K498, K535, K542, and K637. Basic and acidic residues predominate over residues 709 to 736 (EMPTSGSKEKTKVEISKKETSSAPKERP). Positions 709 to 742 (EMPTSGSKEKTKVEISKKETSSAPKERPAPAVSS) are disordered. A WHEP-TRS 1 domain is found at 749-805 (DSSVLYSRVAVQGDVVRELKAKKAPKEDIDAAVKQLLTLKAEYKEKTGQEYKPGNPS). Residues 760–956 (QGDVVRELKA…GIEYKPVSAT (197 aa)) form a 3 X 57 AA approximate repeats region. K788 is modified (N6-acetyllysine). Positions 795–819 (TGQEYKPGNPSAAAVQTVSTKSSSN) are disordered. Polar residues predominate over residues 808–819 (AVQTVSTKSSSN). Residues 822–878 (ESTSLYNKVAAQGEVVRKLKAEKAPKAKVTEAVECLLSLKAEYKEKTGKDYVPGQPP) form the WHEP-TRS 2 domain. N6-acetyllysine is present on K861. Disordered regions lie at residues 869-898 (GKDY…GAEK) and 956-1011 (TGAE…PKKQ). Position 872 is a phosphotyrosine (Y872). Positions 878–892 (PASQNSHSNPVSNAQ) are enriched in polar residues. Phosphoserine is present on S885. A WHEP-TRS 3 domain is found at 900 to 956 (EAKVLFDRVACQGEVVRKLKAEKASKDQVDSAVQELLQLKAQYKSLTGIEYKPVSAT). Residues 958–976 (AEDKDKKKKEKENKSEKQN) are compositionally biased toward basic and acidic residues. Positions 997–1006 (LSSGGAGEGQ) are enriched in gly residues. S998 bears the Phosphoserine mark. The residue at position 999 (S999) is a Phosphoserine; by RPS6KB1. Positions 1007 to 1512 (GPKKQTRLGL…KFYTLFGRSY (506 aa)) are proline--tRNA ligase. Residues 1121-1123 (TSE) and R1152 contribute to the L-proline site. Positions 1152, 1154, 1163, 1164, 1237, and 1240 each coordinate ATP. R1152 is subject to Omega-N-methylarginine. Q1237 contributes to the Mg(2+) binding site. H1242 is a binding site for L-proline. T1276 and R1278 together coordinate ATP. The residue at position 1350 (S1350) is a Phosphoserine. Zn(2+) is bound by residues C1448, C1453, C1495, and C1497. K1503 bears the N6-acetyllysine mark.

In the N-terminal section; belongs to the class-I aminoacyl-tRNA synthetase family. Glutamate--tRNA ligase type 2 subfamily. This sequence in the C-terminal section; belongs to the class-II aminoacyl-tRNA synthetase family. In terms of assembly, homodimer. Part of the aminoacyl-tRNA synthetase multienzyme complex, also know as multisynthetase complex, that is composed of the tRNA ligases for Arg (RARS1), Asp (DARS1), Gln (QARS1), Ile (IARS1), Leu (LARS1), Lys (KARS1), Met (MARS1) the bifunctional ligase for Glu and Pro (EPRS1) and the auxiliary subunits AIMP1/p43, AIMP2/p38 and EEF1E1/p18. Forms a linear complex that contains MARS1, EEF1E1, EPRS1 and AIMP2 that is at the core of the multisubunit complex. Interacts with TARS3. Interacts with DUS2L. Component of the GAIT complex which is composed of EPRS1, RPL13A and GAPDH. Interacts (phosphorylated at Ser-999) with SLC27A1; mediates the translocation of SLC27A1 from the cytoplasm to the plasma membrane thereby increasing the uptake of long-chain fatty acids. Phosphorylated at Ser-999 by RPS6KB1; triggers EPRS1 release from the aminoacyl-tRNA synthetase multienzyme complex. In monocytes, the IFN-gamma-induced phosphorylation at Ser-999 releases EPRS1 from the aminoacyl-tRNA synthetase multienzyme complex, allowing its association with the GAIT complex. Phosphorylation at Ser-999 is specifically required for the RPL13A-mediated interaction of the GAIT complex with eIF4G. Phosphorylation at Ser-999 by RPS6KB1, is also induced by insulin through activation of the mTORC1 signaling pathway and promotes the interaction of EPRS1 with SLC27A1.

The protein localises to the cytoplasm. Its subcellular location is the cytosol. It localises to the membrane. The catalysed reaction is tRNA(Glu) + L-glutamate + ATP = L-glutamyl-tRNA(Glu) + AMP + diphosphate. It catalyses the reaction tRNA(Pro) + L-proline + ATP = L-prolyl-tRNA(Pro) + AMP + diphosphate. In terms of biological role, multifunctional protein which primarily functions within the aminoacyl-tRNA synthetase multienzyme complex, also known as multisynthetase complex. Within the complex it catalyzes the attachment of both L-glutamate and L-proline to their cognate tRNAs in a two-step reaction where the amino acid is first activated by ATP to form a covalent intermediate with AMP. Subsequently, the activated amino acid is transferred to the acceptor end of the cognate tRNA to form L-glutamyl-tRNA(Glu) and L-prolyl-tRNA(Pro). Upon interferon-gamma stimulation, EPRS1 undergoes phosphorylation, causing its dissociation from the aminoacyl-tRNA synthetase multienzyme complex. It is recruited to form the GAIT complex, which binds to stem loop-containing GAIT elements found in the 3'-UTR of various inflammatory mRNAs, such as ceruloplasmin. The GAIT complex inhibits the translation of these mRNAs, allowing interferon-gamma to redirect the function of EPRS1 from protein synthesis to translation inhibition in specific cell contexts. Furthermore, it can function as a downstream effector in the mTORC1 signaling pathway, by promoting the translocation of SLC27A1 from the cytoplasm to the plasma membrane where it mediates the uptake of long-chain fatty acid by adipocytes. Thereby, EPRS1 also plays a role in fat metabolism and more indirectly influences lifespan. This is Bifunctional glutamate/proline--tRNA ligase from Mus musculus (Mouse).